The primary structure comprises 119 residues: Holo-[acyl-carrier-protein] synthase (119 aa).

Mg(2+)-binding residues include D5 and E51.

Belongs to the P-Pant transferase superfamily. AcpS family. Mg(2+) serves as cofactor.

The protein localises to the cytoplasm. The enzyme catalyses apo-[ACP] + CoA = holo-[ACP] + adenosine 3',5'-bisphosphate + H(+). Transfers the 4'-phosphopantetheine moiety from coenzyme A to a Ser of acyl-carrier-protein. The protein is Holo-[acyl-carrier-protein] synthase of Helicobacter pylori (strain G27).